A 234-amino-acid polypeptide reads, in one-letter code: Chalcone--flavanone isomerase 2 (234 aa).

Residues T50, N115, and S192 each contribute to the substrate site.

The protein belongs to the chalcone isomerase family.

The enzyme catalyses a chalcone = a flavanone.. Its pathway is secondary metabolite biosynthesis; flavonoid biosynthesis. Functionally, catalyzes the intramolecular cyclization of bicyclic chalcones into tricyclic (S)-flavanones. Responsible for the isomerization of 4,2',4',6'-tetrahydroxychalcone (also termed chalcone) into naringenin. The chain is Chalcone--flavanone isomerase 2 (CHI2) from Vitis vinifera (Grape).